A 277-amino-acid chain; its full sequence is Release factor glutamine methyltransferase (277 aa).

Residues Gly119–Gly123, Asp142, Trp170, and Asn184 contribute to the S-adenosyl-L-methionine site. Asn184–Tyr187 is a substrate binding site.

The protein belongs to the protein N5-glutamine methyltransferase family. PrmC subfamily.

It carries out the reaction L-glutaminyl-[peptide chain release factor] + S-adenosyl-L-methionine = N(5)-methyl-L-glutaminyl-[peptide chain release factor] + S-adenosyl-L-homocysteine + H(+). Methylates the class 1 translation termination release factors RF1/PrfA and RF2/PrfB on the glutamine residue of the universally conserved GGQ motif. The chain is Release factor glutamine methyltransferase from Buchnera aphidicola subsp. Baizongia pistaciae (strain Bp).